The primary structure comprises 30 residues: Photosystem I reaction center subunit XII (30 aa).

The chain crosses the membrane as a helical span at residues 5–25 (SQIFFALCIALTAAVLAIGLG).

Belongs to the PsaM family.

It is found in the plastid. It localises to the chloroplast thylakoid membrane. The sequence is that of Photosystem I reaction center subunit XII from Emiliania huxleyi (Coccolithophore).